We begin with the raw amino-acid sequence, 521 residues long: GSPVFIAFRSSTKKSVQYDDVPEYEDRLSLSENYTLSISNARISDEKRFVCMLVTEDNVFEAPTIVKVFKQPSKPEIVSKAPFLETEQLKKLGDCISKDSYPDGNITWYRNGKVLQPLEGVVVLIFKKQMDPVTQLYTMTSSLEYKATKADIQMQFTCSVTYYGPSGQKTVQSEQAIFDIYYPTEQVTIQVLPSKTAIKEGDIITLKCLGNGNPPPEEFLFYLPGQPEGIRSSNTYTLTDVRRNATGDYKCSLIDKKSMIASTAITVHYLDLSLNPSGEVTKQIGDALPVSCTISASRNATVVWMKDNIRLRSSPSFSSLQYQDAGNYVCETALQEVEGLKKRESLTLIVEGKPQIKMTKKTDPSGLSKTIICHVEGFPKPAIQWTITGSGSVINQTEESPYINGRYYSTIINSPEENVTLTCTAENQLERTVNSLNVSAISIPEHDEADEISDENREQVNHRATLIVGIVLRLLHGALVAGVVYWLYVKKSKTASKHVNKDLGNLEENKKLEQNNHRTEA.

Residues 1–465 are Extracellular-facing; it reads GSPVFIAFRS…NREQVNHRAT (465 aa). N-linked (GlcNAc...) asparagine glycans are attached at residues Asn33, Asn105, Asn244, Asn299, Asn395, Asn418, and Asn437. The Ig-like V-type 2 domain maps to 63–172; that stretch reads PTIVKVFKQP…YGPSGQKTVQ (110 aa). 4 cysteine pairs are disulfide-bonded: Cys95–Cys158, Cys208–Cys251, Cys292–Cys330, and Cys373–Cys423. Ig-like C2-type domains follow at residues 183–266, 271–347, and 354–439; these read PTEQ…TAIT, DLSL…ESLT, and PQIK…LNVS. Residues 466–487 traverse the membrane as a helical segment; the sequence is LIVGIVLRLLHGALVAGVVYWL. The Cytoplasmic segment spans residues 488–521; the sequence is YVKKSKTASKHVNKDLGNLEENKKLEQNNHRTEA. Positions 500 to 521 are disordered; sequence NKDLGNLEENKKLEQNNHRTEA. The span at 507–521 shows a compositional bias: basic and acidic residues; sequence EENKKLEQNNHRTEA.

In terms of assembly, homodimer. Interacts (via extracellular domain) with CD6 (via extracellular domain). Homodimerization and interaction with CD6 involve the same region and cannot occur simultaneously. The affinity for CD6 is much higher than the affinity for self-association. Interacts (via glycosylated extracellular domain) with LGALS1 and LGALS3. Interaction with LGALS1 or LGALS3 inhibits interaction with CD6. Post-translationally, glycosylated.

The protein resides in the cell membrane. It localises to the cell projection. The protein localises to the axon. It is found in the dendrite. Functionally, cell adhesion molecule that mediates both heterotypic cell-cell contacts via its interaction with CD6, as well as homotypic cell-cell contacts. Promotes T-cell activation and proliferation via its interactions with CD6. Contributes to the formation and maturation of the immunological synapse via its interactions with CD6. Mediates homotypic interactions with cells that express ALCAM. Mediates attachment of dendritic cells onto endothelial cells via homotypic interaction. Inhibits endothelial cell migration and promotes endothelial tube formation via homotypic interactions. Required for normal organization of the lymph vessel network. Required for normal hematopoietic stem cell engraftment in the bone marrow. Plays a role in hematopoiesis; required for normal numbers of hematopoietic stem cells in bone marrow. Promotes in vitro osteoblast proliferation and differentiation. Promotes neurite extension, axon growth and axon guidance; axons grow preferentially on surfaces that contain ALCAM. Mediates outgrowth and pathfinding for retinal ganglion cell axons. In Canis lupus familiaris (Dog), this protein is CD166 antigen (ALCAM).